The chain runs to 468 residues: Probable serine/threonine-protein phosphatase 2A activator 2 (468 aa).

A compositionally biased stretch (low complexity) spans 412–424 (STTTNNNNNNITS). A disordered region spans residues 412 to 468 (STTTNNNNNNITSGDHCNDNEQQCSETHNHDHNHNHNHNHNHPPPPPQQQRSYFPLD).

It belongs to the PTPA-type PPIase family.

Its subcellular location is the cytoplasm. The enzyme catalyses [protein]-peptidylproline (omega=180) = [protein]-peptidylproline (omega=0). Its function is as follows. PPIases accelerate the folding of proteins. It catalyzes the cis-trans isomerization of proline imidic peptide bonds in oligopeptides. Acts as a regulatory subunit for PP2A-like phosphatases modulating their activity or substrate specificity, probably by inducing a conformational change in the catalytic subunit, a direct target of the PPIase. This chain is Probable serine/threonine-protein phosphatase 2A activator 2 (ppp2r4B), found in Dictyostelium discoideum (Social amoeba).